A 274-amino-acid polypeptide reads, in one-letter code: Pyrroline-5-carboxylate reductase 3 (274 aa).

Belongs to the pyrroline-5-carboxylate reductase family. Homodecamer; composed of 5 homodimers.

It localises to the cytoplasm. The enzyme catalyses L-proline + NADP(+) = (S)-1-pyrroline-5-carboxylate + NADPH + 2 H(+). It catalyses the reaction L-proline + NAD(+) = (S)-1-pyrroline-5-carboxylate + NADH + 2 H(+). It participates in amino-acid biosynthesis; L-proline biosynthesis; L-proline from L-glutamate 5-semialdehyde: step 1/1. In terms of biological role, oxidoreductase that catalyzes the last step in proline biosynthesis, which corresponds to the reduction of pyrroline-5-carboxylate (P5C) to L-proline using NAD(P)H. Proline is synthesized from either glutamate or ornithine; both are converted to P5C, and then to proline via pyrroline-5-carboxylate reductases (PYCRs). PYCR3 is exclusively linked to the biosynthesis of proline from ornithine. This Xenopus laevis (African clawed frog) protein is Pyrroline-5-carboxylate reductase 3.